A 1041-amino-acid polypeptide reads, in one-letter code: Cullin-associated NEDD8-dissociated protein 1, C-terminal part (1041 aa).

Disordered stretches follow at residues 1 to 24 (MSSDAMSDYSHDDEHDPQTDELRE) and 64 to 103 (DMGEDEEMSGTQDDGSEDDVTEEPDLEDDDFEDFEEEGGY). Residues 9-24 (YSHDDEHDPQTDELRE) are compositionally biased toward basic and acidic residues. Over residues 65-103 (MGEDEEMSGTQDDGSEDDVTEEPDLEDDDFEDFEEEGGY) the composition is skewed to acidic residues. Residues 138–176 (SLYQQIAPAIVARFNKEREESVKLELVSTMDALVRKTAE) form an HEAT 1 repeat. Residues 189–237 (SVGSGSKISRKRRRQDSDASMIDFEPSMGTSSAAGTPLAAPSSPQSGPQ) form a disordered region. The segment covering 225-237 (PLAAPSSPQSGPQ) has biased composition (low complexity). HEAT repeat units follow at residues 242–279 (NALPVIVRSLVTMWKQASIHLKQAIIILLKSLALVRYG), 339–376 (PFLIALIPGVIVAVNDKNYKVSSEALAAVEQIVKALTP), 434–472 (LSFEKRSKGLVTLVDRLKNETTRLSAVRAIDDVAVLCSR), 479–516 (NWVREVTAELGAQLRKSDRVLRSASLETLRSLSMNPNT), 525–560 (MKNLEECLIPLISVEDVHLLAPSLIIIAKLVPGNAQ), 598–637 (GSGLTLMQNLLQDVGVNGDTSVVGRSIGTLLVHGGSNVGV), 670–708 (GASCSLTPNVFIPHFNSKSEKVRLASATALGNAAAGNVK), 710–744 (YLPTILGGLEKSDPQSYLLLHSVKELLQHPEMVRR), 780–817 (LDPPAYIPQFQEYLANGDAGIRSIVVSAFRFTLSDSRD), and 822–867 (VLRP…HLGE).

Belongs to the CAND family. As to quaternary structure, interacts with candA-N. Interacts with unneddylated cullins culA and culD.

The protein resides in the nucleus. Its function is as follows. Assembly factor of SCF (SKP1-CUL1-F-box protein) E3 ubiquitin ligase complexes that promotes the exchange of the substrate-recognition F-box subunit in SCF complexes, thereby playing a key role in the cellular repertoire of SCF complexes. Acts as a F-box protein exchange factor when interacting with candA-N. The chain is Cullin-associated NEDD8-dissociated protein 1, C-terminal part (candA-C) from Emericella nidulans (strain FGSC A4 / ATCC 38163 / CBS 112.46 / NRRL 194 / M139) (Aspergillus nidulans).